The following is a 90-amino-acid chain: Probable Fe(2+)-trafficking protein (90 aa).

The protein belongs to the Fe(2+)-trafficking protein family.

Could be a mediator in iron transactions between iron acquisition and iron-requiring processes, such as synthesis and/or repair of Fe-S clusters in biosynthetic enzymes. This is Probable Fe(2+)-trafficking protein from Vibrio parahaemolyticus serotype O3:K6 (strain RIMD 2210633).